We begin with the raw amino-acid sequence, 453 residues long: Glutamyl-tRNA(Gln) amidotransferase subunit A (453 aa).

Catalysis depends on charge relay system residues Lys-56 and Ser-131. Ser-155 (acyl-ester intermediate) is an active-site residue.

It belongs to the amidase family. GatA subfamily. As to quaternary structure, heterotrimer of A, B and C subunits.

It catalyses the reaction L-glutamyl-tRNA(Gln) + L-glutamine + ATP + H2O = L-glutaminyl-tRNA(Gln) + L-glutamate + ADP + phosphate + H(+). Allows the formation of correctly charged Gln-tRNA(Gln) through the transamidation of misacylated Glu-tRNA(Gln) in organisms which lack glutaminyl-tRNA synthetase. The reaction takes place in the presence of glutamine and ATP through an activated gamma-phospho-Glu-tRNA(Gln). The polypeptide is Glutamyl-tRNA(Gln) amidotransferase subunit A (Campylobacter jejuni subsp. jejuni serotype O:6 (strain 81116 / NCTC 11828)).